The sequence spans 83 residues: Cytotoxin homolog 5 (83 aa).

Residues 1 to 21 (MKTLLLTMVVVTIVCLDLGYT) form the signal peptide. Cystine bridges form between Cys-24-Cys-43, Cys-36-Cys-61, Cys-65-Cys-76, and Cys-77-Cys-82.

This sequence belongs to the three-finger toxin family. Short-chain subfamily. Orphan group XV sub-subfamily. In terms of tissue distribution, expressed by the venom gland.

It is found in the secreted. The protein localises to the target cell membrane. Has low cytotoxic activity. The protein is Cytotoxin homolog 5 of Naja atra (Chinese cobra).